Consider the following 420-residue polypeptide: uncharacterized protein (420 aa).

The YcaO domain occupies 79 to 420 (GKGIDNEAAM…AVNTIRGAES (342 aa)).

This is an uncharacterized protein from Rhizobium leguminosarum bv. trifolii.